Reading from the N-terminus, the 239-residue chain is MIKIPLNTLSAKSAAALDQELMSSGAFSIDQLMELAGLSVSQAVFKLQPLNKGKRILVACGPGNNGGDGLVAARHLFHYGYQPTIYYPKQSKNELYQRLRKQLEDLKVPFTEDFPGALKQTDHVVDAIFGFSFSGEVREPFPKVIEALESTSIPVLAVDAPSSWSIEDGPPESGPGKGFMPPALISLTAPKPLVKHFKGRHFLGGRFLSPEMAEQYNLDIPKYEGLDQVVEVPVESGKL.

A YjeF N-terminal domain is found at 14-220; the sequence is AAALDQELMS…EMAEQYNLDI (207 aa). Residue 64-68 participates in (6S)-NADPHX binding; that stretch reads NNGGD. The K(+) site is built by Asn65 and Asp126. (6S)-NADPHX is bound by residues 130–136 and Asp159; that span reads GFSFSGE. Ser162 lines the K(+) pocket.

The protein belongs to the NnrE/AIBP family. The cofactor is K(+).

It localises to the cytoplasm. Its subcellular location is the mitochondrion. The enzyme catalyses (6R)-NADHX = (6S)-NADHX. It catalyses the reaction (6R)-NADPHX = (6S)-NADPHX. Functionally, catalyzes the epimerization of the S- and R-forms of NAD(P)HX, a damaged form of NAD(P)H that is a result of enzymatic or heat-dependent hydration. This is a prerequisite for the S-specific NAD(P)H-hydrate dehydratase to allow the repair of both epimers of NAD(P)HX. The polypeptide is NAD(P)H-hydrate epimerase (Phaeosphaeria nodorum (strain SN15 / ATCC MYA-4574 / FGSC 10173) (Glume blotch fungus)).